The following is a 474-amino-acid chain: Glutamate--tRNA ligase (474 aa).

A 'HIGH' region motif is present at residues proline 9–glycine 19. A 'KMSKS' region motif is present at residues lysine 240 to arginine 244. Lysine 243 contributes to the ATP binding site.

It belongs to the class-I aminoacyl-tRNA synthetase family. Glutamate--tRNA ligase type 1 subfamily. Monomer.

Its subcellular location is the cytoplasm. It carries out the reaction tRNA(Glu) + L-glutamate + ATP = L-glutamyl-tRNA(Glu) + AMP + diphosphate. Catalyzes the attachment of glutamate to tRNA(Glu) in a two-step reaction: glutamate is first activated by ATP to form Glu-AMP and then transferred to the acceptor end of tRNA(Glu). In Vibrio cholerae serotype O1 (strain ATCC 39315 / El Tor Inaba N16961), this protein is Glutamate--tRNA ligase.